We begin with the raw amino-acid sequence, 137 residues long: Large ribosomal subunit protein uL16 (137 aa).

It belongs to the universal ribosomal protein uL16 family. In terms of assembly, part of the 50S ribosomal subunit.

Its function is as follows. Binds 23S rRNA and is also seen to make contacts with the A and possibly P site tRNAs. The protein is Large ribosomal subunit protein uL16 of Chlamydia abortus (strain DSM 27085 / S26/3) (Chlamydophila abortus).